The primary structure comprises 200 residues: ATP synthase subunit s, mitochondrial (200 aa).

The N-terminal 25 residues, 1–25 (MMMFGKISRQLCSLKKIPWSCDSRY), are a transit peptide targeting the mitochondrion. Residues 1-61 (MMMFGKISRQ…SEWLLRCGAK (61 aa)) are N-terminal domain. G59 is a binding site for Mg(2+). LRR repeat units follow at residues 62-87 (VRYC…RYKI), 88-116 (QAID…KITL), 117-141 (CKCH…KSLL), and 142-173 (ELEI…LSDL). Mg(2+) is bound at residue T93.

It belongs to the ATP synthase subunit s family. In terms of assembly, homotetramer. Associates with ATP synthase.

It is found in the mitochondrion. The protein resides in the mitochondrion inner membrane. Its function is as follows. Involved in regulation of mitochondrial membrane ATP synthase. Necessary for H(+) conduction of ATP synthase. Facilitates energy-driven catalysis of ATP synthesis by blocking a proton leak through an alternative proton exit pathway. The protein is ATP synthase subunit s, mitochondrial (Dmac2l) of Mus musculus (Mouse).